The chain runs to 443 residues: Probable D-serine dehydratase (443 aa).

Position 118 is an N6-(pyridoxal phosphate)lysine (Lys-118).

It belongs to the serine/threonine dehydratase family. DsdA subfamily. It depends on pyridoxal 5'-phosphate as a cofactor.

The enzyme catalyses D-serine = pyruvate + NH4(+). The sequence is that of Probable D-serine dehydratase from Aeromonas hydrophila subsp. hydrophila (strain ATCC 7966 / DSM 30187 / BCRC 13018 / CCUG 14551 / JCM 1027 / KCTC 2358 / NCIMB 9240 / NCTC 8049).